Consider the following 384-residue polypeptide: Probable intron-encoded endonuclease Cox1-I1b (384 aa).

This sequence belongs to the LAGLIDADG endonuclease family.

It is found in the mitochondrion. Functionally, probable mitochondrial DNA endonuclease involved in intron homing. The chain is Probable intron-encoded endonuclease Cox1-I1b (cox1-I1b) from Schizosaccharomyces pombe (strain 972 / ATCC 24843) (Fission yeast).